We begin with the raw amino-acid sequence, 1381 residues long: Hepatocyte growth factor receptor (1381 aa).

An N-terminal signal peptide occupies residues 1–24 (MKAPAVLVPGILVLLFTLVQRSNG). Over 25 to 932 (ECKEALAKSE…VIVQPDQNFT (908 aa)) the chain is Extracellular. Positions 27–515 (KEALAKSEMN…TGKKITKIPL (489 aa)) constitute a Sema domain. N-linked (GlcNAc...) asparagine glycosylation occurs at Asn-45. Intrachain disulfides connect Cys-95/Cys-101, Cys-98/Cys-160, Cys-133/Cys-141, and Cys-172/Cys-175. N-linked (GlcNAc...) asparagine glycosylation is present at Asn-106. An N-linked (GlcNAc...) asparagine glycan is attached at Asn-149. N-linked (GlcNAc...) asparagine glycosylation is present at Asn-202. Cystine bridges form between Cys-298-Cys-363 and Cys-385-Cys-397. N-linked (GlcNAc...) asparagine glycans are attached at residues Asn-399 and Asn-405. 4 disulfide bridges follow: Cys-520-Cys-538, Cys-526-Cys-561, Cys-529-Cys-545, and Cys-541-Cys-551. 3 IPT/TIG domains span residues 563–655 (PAIY…FSYV), 657–739 (PIIT…FSYR), and 742–836 (PIVY…LIYV). Thr-582 carries O-linked (Man) threonine glycosylation. Residues Asn-607 and Asn-635 are each glycosylated (N-linked (GlcNAc...) asparagine). O-linked (Man) threonine glycans are attached at residues Thr-676 and Thr-761. 3 N-linked (GlcNAc...) asparagine glycosylation sites follow: Asn-785, Asn-879, and Asn-930. A helical transmembrane segment spans residues 933–955 (GLIAGVVSISIALLLLLGLFLWL). The Cytoplasmic portion of the chain corresponds to 956–1381 (KKRKQIKDLG…EDNADDEVDT (426 aa)). Ser-966 carries the post-translational modification Phosphoserine. The residue at position 977 (Thr-977) is a Phosphothreonine. 3 positions are modified to phosphoserine: Ser-990, Ser-997, and Ser-1000. Tyr-1003 is modified (phosphotyrosine). The Protein kinase domain occupies 1078–1345 (VHFNEVIGRG…RISAIFSTFI (268 aa)). ATP is bound by residues 1084–1092 (IGRGHFGCV) and Lys-1110. The active-site Proton acceptor is the Asp-1204. The interaction with RANBP9 stretch occupies residues 1212-1381 (LDEKFTVKVA…EDNADDEVDT (170 aa)). A Phosphotyrosine modification is found at Tyr-1230. 2 positions are modified to phosphotyrosine; by autocatalysis: Tyr-1234 and Tyr-1235. Thr-1289 carries the post-translational modification Phosphothreonine. The tract at residues 1320 to 1359 (WHPKAEMRPSFSELVSRISAIFSTFIGEHYVHVNATYVNV) is interaction with MUC20. 2 positions are modified to phosphotyrosine; by autocatalysis: Tyr-1349 and Tyr-1356. Tyr-1365 carries the phosphotyrosine modification.

It belongs to the protein kinase superfamily. Tyr protein kinase family. As to quaternary structure, heterodimer made of an alpha chain (50 kDa) and a beta chain (145 kDa) which are disulfide linked. Binds PLXNB1. Interacts when phosphorylated with downstream effectors including STAT3, PIK3R1, SRC, PCLG1, GRB2 and GAB1. Interacts with SPSB1, SPSB2 and SPSB4. Interacts with INPP5D/SHIP1. When phosphorylated at Tyr-1356, interacts with INPPL1/SHIP2. Interacts with RANBP9 and RANBP10, as well as SPSB1, SPSB2, SPSB3 and SPSB4. SPSB1 binding occurs in the presence and in the absence of HGF, however HGF treatment has a positive effect on this interaction. Interacts with MUC20; prevents interaction with GRB2 and suppresses hepatocyte growth factor-induced cell proliferation. Interacts with GRB10. Interacts with PTPN1 and PTPN2. Interacts with HSP90AA1 and HSP90AB1; the interaction suppresses MET kinase activity. Interacts with tensin TNS3. Interacts (when phosphorylated) with tensin TNS4 (via SH2 domain); the interaction increases MET protein stability by inhibiting MET endocytosis and subsequent lysosomal degradation. Autophosphorylated in response to ligand binding on Tyr-1234 and Tyr-1235 in the kinase domain leading to further phosphorylation of Tyr-1349 and Tyr-1356 in the C-terminal multifunctional docking site. Dephosphorylated by PTPRJ at Tyr-1349 and Tyr-1365. Dephosphorylated by PTPN1 and PTPN2. In terms of processing, ubiquitinated. Ubiquitination by CBL regulates the receptor stability and activity through proteasomal degradation. Post-translationally, O-mannosylation of IPT/TIG domains by TMEM260 is required for protein maturation. O-mannosylated residues are composed of single mannose glycans that are not elongated or modified.

It localises to the membrane. It catalyses the reaction L-tyrosyl-[protein] + ATP = O-phospho-L-tyrosyl-[protein] + ADP + H(+). In its inactive state, the C-terminal tail interacts with the catalytic domain and inhibits the kinase activity. Upon ligand binding, the C-terminal tail is displaced and becomes phosphorylated, thus increasing the kinase activity. In terms of biological role, receptor tyrosine kinase that transduces signals from the extracellular matrix into the cytoplasm by binding to hepatocyte growth factor/HGF ligand. Regulates many physiological processes including proliferation, scattering, morphogenesis and survival. Ligand binding at the cell surface induces autophosphorylation of MET on its intracellular domain that provides docking sites for downstream signaling molecules. Following activation by ligand, interacts with the PI3-kinase subunit PIK3R1, PLCG1, SRC, GRB2, STAT3 or the adapter GAB1. Recruitment of these downstream effectors by MET leads to the activation of several signaling cascades including the RAS-ERK, PI3 kinase-AKT, or PLCgamma-PKC. The RAS-ERK activation is associated with the morphogenetic effects while PI3K/AKT coordinates prosurvival effects. During embryonic development, MET signaling plays a role in gastrulation, development and migration of muscles and neuronal precursors, angiogenesis and kidney formation. In adults, participates in wound healing as well as organ regeneration and tissue remodeling. Also promotes differentiation and proliferation of hematopoietic cells. This Papio anubis (Olive baboon) protein is Hepatocyte growth factor receptor (MET).